We begin with the raw amino-acid sequence, 365 residues long: MKFIDEARIEAIAGNGGNGSASFRREKFVPFGGPDGGDGGRGGSVFAVADRNINTLIDFRYARKHVARNGENGRGSDCYGAAGEDITLRMPVGTLITDMDTGEVIADLTEHGQRVCLAEGGMGGWGNLHFKSSTNRAPRQQVDGKPGERRMLKLELKVLADVGLLGMPNAGKSTFISHISNARPKVADYPFTTLHPNLGVVRVDHEQSFVVADIPGLIEGAAEGAGLGHQFLRHLQRTGLLLHIVDLAPFDEAVDPVAEAKAIVNELKKYDETLYDKPRWLVLNKLDVVPEDERAARVKDFIKRYKWKGPVFQISALTGEGCRELIYAIKDHLQAIKAEEAAALAEPDIRLDERLHNVDQGQGEA.

An Obg domain is found at 1 to 159 (MKFIDEARIE…RMLKLELKVL (159 aa)). The OBG-type G domain maps to 160–334 (ADVGLLGMPN…LIYAIKDHLQ (175 aa)). GTP is bound by residues 166–173 (GMPNAGKS), 191–195 (FTTLH), 213–216 (DIPG), 284–287 (NKLD), and 315–317 (SAL). Residues Ser-173 and Thr-193 each coordinate Mg(2+).

Belongs to the TRAFAC class OBG-HflX-like GTPase superfamily. OBG GTPase family. As to quaternary structure, monomer. Mg(2+) is required as a cofactor.

It is found in the cytoplasm. Its function is as follows. An essential GTPase which binds GTP, GDP and possibly (p)ppGpp with moderate affinity, with high nucleotide exchange rates and a fairly low GTP hydrolysis rate. Plays a role in control of the cell cycle, stress response, ribosome biogenesis and in those bacteria that undergo differentiation, in morphogenesis control. The polypeptide is GTPase Obg (Cupriavidus necator (strain ATCC 17699 / DSM 428 / KCTC 22496 / NCIMB 10442 / H16 / Stanier 337) (Ralstonia eutropha)).